A 260-amino-acid chain; its full sequence is Hemin import ATP-binding protein HmuV (260 aa).

Residues 2 to 239 form the ABC transporter domain; sequence IRAENITLIR…ETIARVYGIG (238 aa). 34–41 is a binding site for ATP; that stretch reads GPNGAGKS.

The protein belongs to the ABC transporter superfamily. Heme (hemin) importer (TC 3.A.1.14.5) family. In terms of assembly, the complex is composed of two ATP-binding proteins (HmuV), two transmembrane proteins (HmuU) and a solute-binding protein (HmuT).

It localises to the cell inner membrane. In terms of biological role, part of the ABC transporter complex HmuTUV involved in hemin import. Responsible for energy coupling to the transport system. This is Hemin import ATP-binding protein HmuV from Agrobacterium fabrum (strain C58 / ATCC 33970) (Agrobacterium tumefaciens (strain C58)).